The following is a 1069-amino-acid chain: DNA annealing helicase and endonuclease ZRANB3 (1069 aa).

The Helicase ATP-binding domain maps to 46–208 (VFALRRDGRC…FMQIEALFPQ (163 aa)). The segment at 46–481 (VFALRRDGRC…GRKEKLQATE (436 aa)) is DNA annealing helicase activity. Residue 59 to 66 (DEMGLGKT) participates in ATP binding. A DEAH box motif is present at residues 157–160 (DESH). The Helicase C-terminal domain maps to 325–485 (AVKDYIKMLL…KLQATEDDKE (161 aa)). A PIP-box motif is present at residues 518–525 (QHDIRSFF). A RanBP2-type zinc finger spans residues 617 to 646 (PEKGWQCGFCTFLNNPGLPYCEMCENPRSR). The interval 648-720 (AGRNHLQDNN…PEIGQLNNSG (73 aa)) is disordered. Composition is skewed to basic and acidic residues over residues 652 to 661 (HLQDNNKNDE) and 677 to 707 (ECERQCPERLEAEQSANSKEEALEGGGEDRL). One can recognise an HNH domain in the interval 1001–1041 (PGEGHFWQVDHIRPVYEGGGQCSLDNLQTLCTVCHKERTAQ). Residues 1001 to 1069 (PGEGHFWQVD…SDITRFLVKK (69 aa)) form an endonuclease activity region. Positions 1064 to 1068 (RFLVK) match the APIM motif motif.

The protein belongs to the SNF2/RAD54 helicase family. In terms of assembly, interacts (via PIP-box and RanBP2-type zinc finger) with PCNA (when PCNA is polyubiquitinated via 'Lys-63'-linked polyubiquitin).

The protein resides in the nucleus. The protein localises to the chromosome. Its function is as follows. DNA annealing helicase and endonuclease required to maintain genome stability at stalled or collapsed replication forks by facilitating fork restart and limiting inappropriate recombination that could occur during template switching events. Recruited to the sites of stalled DNA replication by polyubiquitinated PCNA and acts as a structure-specific endonuclease that cleaves the replication fork D-loop intermediate, generating an accessible 3'-OH group in the template of the leading strand, which is amenable to extension by DNA polymerase. In addition to endonuclease activity, also catalyzes the fork regression via annealing helicase activity in order to prevent disintegration of the replication fork and the formation of double-strand breaks. This chain is DNA annealing helicase and endonuclease ZRANB3 (Zranb3), found in Mus musculus (Mouse).